We begin with the raw amino-acid sequence, 318 residues long: Quinolinate synthase (318 aa).

Residues H34 and S51 each contribute to the iminosuccinate site. A [4Fe-4S] cluster-binding site is contributed by C96. Residues 122–124 (YIN) and S139 each bind iminosuccinate. C182 provides a ligand contact to [4Fe-4S] cluster. Iminosuccinate contacts are provided by residues 208–210 (HPE) and T225. Residue C275 participates in [4Fe-4S] cluster binding.

This sequence belongs to the quinolinate synthase family. Type 2 subfamily. [4Fe-4S] cluster is required as a cofactor.

The protein localises to the cytoplasm. It catalyses the reaction iminosuccinate + dihydroxyacetone phosphate = quinolinate + phosphate + 2 H2O + H(+). Its pathway is cofactor biosynthesis; NAD(+) biosynthesis; quinolinate from iminoaspartate: step 1/1. Its function is as follows. Catalyzes the condensation of iminoaspartate with dihydroxyacetone phosphate to form quinolinate. The polypeptide is Quinolinate synthase (Synechocystis sp. (strain ATCC 27184 / PCC 6803 / Kazusa)).